The following is a 354-amino-acid chain: Phosphoribosylformylglycinamidine cyclo-ligase (354 aa).

The protein belongs to the AIR synthase family.

Its subcellular location is the cytoplasm. It catalyses the reaction 2-formamido-N(1)-(5-O-phospho-beta-D-ribosyl)acetamidine + ATP = 5-amino-1-(5-phospho-beta-D-ribosyl)imidazole + ADP + phosphate + H(+). It functions in the pathway purine metabolism; IMP biosynthesis via de novo pathway; 5-amino-1-(5-phospho-D-ribosyl)imidazole from N(2)-formyl-N(1)-(5-phospho-D-ribosyl)glycinamide: step 2/2. The polypeptide is Phosphoribosylformylglycinamidine cyclo-ligase (Synechococcus sp. (strain JA-2-3B'a(2-13)) (Cyanobacteria bacterium Yellowstone B-Prime)).